The chain runs to 197 residues: MTKLIGLTGGIATGKSTVSKLLATKLPIVDADKIAWQVEGPGQPTTQKIVAHFGQQAVLADGRLNRPWLGQLVFNDAQALQALTAITRLPIQYAMFEAIVAANQQQPDAIILDVPLLFESGWQHVCDQVLVVTASPAVVLQRLMARNHLSQQAAQARIDSQMPLAQKVARADVVIDNGANIDKTKAAVLKWLKTITK.

Residues 4–197 enclose the DPCK domain; the sequence is LIGLTGGIAT…VLKWLKTITK (194 aa). 12 to 17 provides a ligand contact to ATP; sequence ATGKST.

This sequence belongs to the CoaE family.

Its subcellular location is the cytoplasm. The enzyme catalyses 3'-dephospho-CoA + ATP = ADP + CoA + H(+). Its pathway is cofactor biosynthesis; coenzyme A biosynthesis; CoA from (R)-pantothenate: step 5/5. In terms of biological role, catalyzes the phosphorylation of the 3'-hydroxyl group of dephosphocoenzyme A to form coenzyme A. In Lactiplantibacillus plantarum (strain ATCC BAA-793 / NCIMB 8826 / WCFS1) (Lactobacillus plantarum), this protein is Dephospho-CoA kinase.